Reading from the N-terminus, the 155-residue chain is Small ribosomal subunit protein uS7cz/uS7cy (155 aa).

This sequence belongs to the universal ribosomal protein uS7 family. As to quaternary structure, part of the 30S ribosomal subunit.

Its subcellular location is the plastid. It is found in the chloroplast. Functionally, one of the primary rRNA binding proteins, it binds directly to 16S rRNA where it nucleates assembly of the head domain of the 30S subunit. The protein is Small ribosomal subunit protein uS7cz/uS7cy (rps7-A) of Citrus sinensis (Sweet orange).